Reading from the N-terminus, the 523-residue chain is 2-isopropylmalate synthase (523 aa).

The region spanning 5 to 267 (VIIFDTTLRD…ETGINAKEIH (263 aa)) is the Pyruvate carboxyltransferase domain. Positions 14, 202, 204, and 238 each coordinate Mn(2+). The regulatory domain stretch occupies residues 392-523 (QLKQLVVHSD…QQKARSLGGV (132 aa)).

This sequence belongs to the alpha-IPM synthase/homocitrate synthase family. LeuA type 1 subfamily. Homodimer. It depends on Mn(2+) as a cofactor.

The protein localises to the cytoplasm. The enzyme catalyses 3-methyl-2-oxobutanoate + acetyl-CoA + H2O = (2S)-2-isopropylmalate + CoA + H(+). The protein operates within amino-acid biosynthesis; L-leucine biosynthesis; L-leucine from 3-methyl-2-oxobutanoate: step 1/4. Its function is as follows. Catalyzes the condensation of the acetyl group of acetyl-CoA with 3-methyl-2-oxobutanoate (2-ketoisovalerate) to form 3-carboxy-3-hydroxy-4-methylpentanoate (2-isopropylmalate). The protein is 2-isopropylmalate synthase of Shewanella woodyi (strain ATCC 51908 / MS32).